The following is a 238-amino-acid chain: Purine nucleoside phosphorylase DeoD-type 1 (238 aa).

His-5 contributes to the a purine D-ribonucleoside binding site. Residues Gly-21, Arg-25, Arg-44, and 88-91 (RVGS) contribute to the phosphate site. A purine D-ribonucleoside-binding positions include 180–182 (EME) and 204–205 (SD). The active-site Proton donor is Asp-205.

This sequence belongs to the PNP/UDP phosphorylase family. Homohexamer; trimer of homodimers.

The enzyme catalyses a purine D-ribonucleoside + phosphate = a purine nucleobase + alpha-D-ribose 1-phosphate. It carries out the reaction a purine 2'-deoxy-D-ribonucleoside + phosphate = a purine nucleobase + 2-deoxy-alpha-D-ribose 1-phosphate. In terms of biological role, catalyzes the reversible phosphorolytic breakdown of the N-glycosidic bond in the beta-(deoxy)ribonucleoside molecules, with the formation of the corresponding free purine bases and pentose-1-phosphate. The polypeptide is Purine nucleoside phosphorylase DeoD-type 1 (Aliivibrio fischeri (strain ATCC 700601 / ES114) (Vibrio fischeri)).